The sequence spans 312 residues: MSSSEIYRYYYKTSEDLQGFKTAAAEPYFNPMAAYNPGVTHYQFNGNTLASSSNYLSANGFISFEQASSDGWISSSPASHRSESPEYVDLNTMYNGGCNNMAQNQQYGMIMEQSVVSTAPAIPVASPPAVEVMGSSNVGTCKTIPASAGPKPKRSYTKKNQPSTTATSTPTAAAESSASVNLYTEEFQNFDFDNSALFDDSVEDDEDLMLFSGGEDFDGNDGSFDLADGENQDAAAGGSGKKRRGKQITPVVKRKRRLAANARERRRMQNLNQAFDRLRQYLPCLGNDRQLSKHETLQMAQTYISALGDLLR.

2 disordered regions span residues serine 136–alanine 174 and asparagine 220–isoleucine 248. A compositionally biased stretch (low complexity) spans proline 162–alanine 174. Positions lysine 255–leucine 307 constitute a bHLH domain.

Efficient DNA binding requires dimerization with another bHLH protein. Forms a heterodimer with Daughterless. As to expression, proneural clusters and sense organ precursors of the chordotonal organs, optic furrow of the eye-antennal disk and developing brain lobe.

It is found in the nucleus. Functionally, developmental protein involved in neurogenesis. Required for the formation of chordotonal organs and photoreceptors. Seems to bind to E boxes. Specifically required for the photoreceptor R8 selection. In Drosophila melanogaster (Fruit fly), this protein is Protein atonal (ato).